The following is a 125-amino-acid chain: Photosystem II extrinsic protein U (125 aa).

The signal sequence occupies residues 1–29; sequence MKRLLSWLTGLVVMAGLLFSLATPSGVQA.

This sequence belongs to the PsbU family. In terms of assembly, PSII is composed of 1 copy each of membrane proteins PsbA, PsbB, PsbC, PsbD, PsbE, PsbF, PsbH, PsbI, PsbJ, PsbK, PsbL, PsbM, PsbT, PsbX, PsbY, PsbZ, Psb30/Ycf12, peripheral proteins PsbO, CyanoQ (PsbQ), PsbU, PsbV and a large number of cofactors. It forms dimeric complexes.

The protein resides in the cellular thylakoid membrane. One of the extrinsic, lumenal subunits of photosystem II (PSII). PSII is a light-driven water plastoquinone oxidoreductase, using light energy to abstract electrons from H(2)O, generating a proton gradient subsequently used for ATP formation. The extrinsic proteins stabilize the structure of photosystem II oxygen-evolving complex (OEC), the ion environment of oxygen evolution and protect the OEC against heat-induced inactivation. The chain is Photosystem II extrinsic protein U from Synechococcus sp. (strain WH7803).